Reading from the N-terminus, the 172-residue chain is Peptide deformylase 1 (172 aa).

Residues Cys-91 and His-133 each contribute to the Fe cation site. Glu-134 is a catalytic residue. Position 137 (His-137) interacts with Fe cation.

Belongs to the polypeptide deformylase family. It depends on Fe(2+) as a cofactor.

It catalyses the reaction N-terminal N-formyl-L-methionyl-[peptide] + H2O = N-terminal L-methionyl-[peptide] + formate. Its function is as follows. Removes the formyl group from the N-terminal Met of newly synthesized proteins. Requires at least a dipeptide for an efficient rate of reaction. N-terminal L-methionine is a prerequisite for activity but the enzyme has broad specificity at other positions. The protein is Peptide deformylase 1 of Vibrio parahaemolyticus serotype O3:K6 (strain RIMD 2210633).